The chain runs to 635 residues: Biosynthetic arginine decarboxylase (635 aa).

Residue K100 is modified to N6-(pyridoxal phosphate)lysine. A substrate-binding site is contributed by 282-292 (LDIGGGLGVDY).

Belongs to the Orn/Lys/Arg decarboxylase class-II family. SpeA subfamily. It depends on Mg(2+) as a cofactor. Pyridoxal 5'-phosphate is required as a cofactor.

The enzyme catalyses L-arginine + H(+) = agmatine + CO2. Its pathway is amine and polyamine biosynthesis; agmatine biosynthesis; agmatine from L-arginine: step 1/1. Catalyzes the biosynthesis of agmatine from arginine. This chain is Biosynthetic arginine decarboxylase, found in Trichlorobacter lovleyi (strain ATCC BAA-1151 / DSM 17278 / SZ) (Geobacter lovleyi).